The following is a 319-amino-acid chain: Ribonuclease Z (319 aa).

H62, H64, D66, H67, H145, D215, and H273 together coordinate Zn(2+). Residue D66 is the Proton acceptor of the active site.

The protein belongs to the RNase Z family. In terms of assembly, homodimer. The cofactor is Zn(2+).

It carries out the reaction Endonucleolytic cleavage of RNA, removing extra 3' nucleotides from tRNA precursor, generating 3' termini of tRNAs. A 3'-hydroxy group is left at the tRNA terminus and a 5'-phosphoryl group is left at the trailer molecule.. Zinc phosphodiesterase, which displays some tRNA 3'-processing endonuclease activity. Probably involved in tRNA maturation, by removing a 3'-trailer from precursor tRNA. The polypeptide is Ribonuclease Z (Borrelia duttonii (strain Ly)).